We begin with the raw amino-acid sequence, 346 residues long: Methylthioribose-1-phosphate isomerase (346 aa).

Residues 50–52 (RGA), R93, and Q196 contribute to the substrate site. Residue D237 is the Proton donor of the active site. 247–248 (NK) is a binding site for substrate.

Belongs to the eIF-2B alpha/beta/delta subunits family. MtnA subfamily.

It catalyses the reaction 5-(methylsulfanyl)-alpha-D-ribose 1-phosphate = 5-(methylsulfanyl)-D-ribulose 1-phosphate. The protein operates within amino-acid biosynthesis; L-methionine biosynthesis via salvage pathway; L-methionine from S-methyl-5-thio-alpha-D-ribose 1-phosphate: step 1/6. In terms of biological role, catalyzes the interconversion of methylthioribose-1-phosphate (MTR-1-P) into methylthioribulose-1-phosphate (MTRu-1-P). The chain is Methylthioribose-1-phosphate isomerase from Alkalilimnicola ehrlichii (strain ATCC BAA-1101 / DSM 17681 / MLHE-1).